Consider the following 186-residue polypeptide: dCTP deaminase (186 aa).

Position 107–112 (Lys-107–Arg-112) interacts with dCTP. The active-site Proton donor/acceptor is the Glu-133. Positions 152, 166, and 176 each coordinate dCTP.

Belongs to the dCTP deaminase family. As to quaternary structure, homotrimer.

It carries out the reaction dCTP + H2O + H(+) = dUTP + NH4(+). It participates in pyrimidine metabolism; dUMP biosynthesis; dUMP from dCTP (dUTP route): step 1/2. Catalyzes the deamination of dCTP to dUTP. This chain is dCTP deaminase, found in Campylobacter concisus (strain 13826).